The following is a 287-amino-acid chain: tRNA selenocysteine 1-associated protein 1 (287 aa).

2 RRM domains span residues 3–86 (ASLW…YATY) and 96–175 (YSLF…VAIP).

Belongs to the RRM TRSPAP family. In terms of assembly, component of the tRNA(Sec) complex composed at least of EEFSEC, SECISBP2, SEPHS1, SEPSECS, TRNAU1AP and tRNA(Sec). Found in a complex with tRNA(Sec). Interacts with SEPSECS. Associates with mRNP and/or polysomes. Found in a complex with EEFSEC, SECISBP2, TRNAU1AP and tRNA(Sec).

The protein resides in the nucleus. Its subcellular location is the cytoplasm. In terms of biological role, involved in the early steps of selenocysteine biosynthesis and tRNA(Sec) charging to the later steps resulting in the cotranslational incorporation of selenocysteine into selenoproteins. Stabilizes the SECISBP2, EEFSEC and tRNA(Sec) complex. May be involved in the methylation of tRNA(Sec). Enhances efficiency of selenoproteins synthesis. The polypeptide is tRNA selenocysteine 1-associated protein 1 (TRNAU1AP) (Homo sapiens (Human)).